A 350-amino-acid polypeptide reads, in one-letter code: Probable DNA polymerase III subunit delta (350 aa).

It belongs to the DNA polymerase HolA subunit family. As to quaternary structure, component of the DNA clamp loading complex consisting of tau(3):delta(1):delta'(1). The DNA polymerase III holoenzyme complex contains at least 10 different subunits organized into 3 functionally essential subassemblies: the Pol III core, the beta sliding clamp processivity factor and the clamp-loading complex. The Pol III core (subunits alpha, epsilon and theta) contains the polymerase and the 3'-5' exonuclease proofreading activities. The polymerase is tethered to the template via the dimeric beta sliding clamp processivity factor. The DNA clamp-loading complex assembles the beta sliding clamp onto the primed template and plays a central role in the organization and communication at the replication fork.

The enzyme catalyses DNA(n) + a 2'-deoxyribonucleoside 5'-triphosphate = DNA(n+1) + diphosphate. Its function is as follows. Part of the beta sliding clamp loading complex, which hydrolyzes ATP to load the beta clamp onto primed DNA to form the DNA replication pre-initiation complex. DNA polymerase III is a complex, multichain enzyme responsible for most of the replicative synthesis in bacteria. This DNA polymerase also exhibits 3'-5' exonuclease activity. The delta subunit is the wrench that will open the beta subunit dimer. The DNA clamp loading complex (tau(3),delta,delta') is thought to load beta dimers onto DNA by binding ATP which alters the complex's conformation so it can bind beta sliding clamp dimers and open them at one interface. Primed DNA is recognized, ATP is hydrolyzed releasing the clamp loading complex and closing the beta sliding clamp ring around the primed DNA. The polypeptide is Probable DNA polymerase III subunit delta (Aquifex aeolicus (strain VF5)).